Consider the following 282-residue polypeptide: NADPH-dependent 7-cyano-7-deazaguanine reductase (282 aa).

Position 88–90 (88–90 (IES)) interacts with substrate. 90 to 91 (SK) contributes to the NADPH binding site. C190 (thioimide intermediate) is an active-site residue. The active-site Proton donor is D197. 229–230 (HE) is a substrate binding site. Position 258 to 259 (258 to 259 (RG)) interacts with NADPH.

Belongs to the GTP cyclohydrolase I family. QueF type 2 subfamily. In terms of assembly, homodimer.

It is found in the cytoplasm. The enzyme catalyses 7-aminomethyl-7-carbaguanine + 2 NADP(+) = 7-cyano-7-deazaguanine + 2 NADPH + 3 H(+). It participates in tRNA modification; tRNA-queuosine biosynthesis. Its function is as follows. Catalyzes the NADPH-dependent reduction of 7-cyano-7-deazaguanine (preQ0) to 7-aminomethyl-7-deazaguanine (preQ1). The sequence is that of NADPH-dependent 7-cyano-7-deazaguanine reductase from Salmonella paratyphi B (strain ATCC BAA-1250 / SPB7).